The primary structure comprises 308 residues: Glutaminase 2 (308 aa).

Substrate contacts are provided by Ser-66, Asn-117, Glu-161, Asn-168, Tyr-192, Tyr-244, and Val-262.

The protein belongs to the glutaminase family. In terms of assembly, homotetramer.

It carries out the reaction L-glutamine + H2O = L-glutamate + NH4(+). In Shigella flexneri, this protein is Glutaminase 2.